The primary structure comprises 148 residues: Aspartate 1-decarboxylase (148 aa).

Ser-25 serves as the catalytic Schiff-base intermediate with substrate; via pyruvic acid. Residue Ser-25 is modified to Pyruvic acid (Ser). Thr-57 is a substrate binding site. The active-site Proton donor is Tyr-58. Position 73–75 (Gly-73–Ala-75) interacts with substrate.

It belongs to the PanD family. As to quaternary structure, heterooctamer of four alpha and four beta subunits. The cofactor is pyruvate. Is synthesized initially as an inactive proenzyme, which is activated by self-cleavage at a specific serine bond to produce a beta-subunit with a hydroxyl group at its C-terminus and an alpha-subunit with a pyruvoyl group at its N-terminus.

It is found in the cytoplasm. The catalysed reaction is L-aspartate + H(+) = beta-alanine + CO2. The protein operates within cofactor biosynthesis; (R)-pantothenate biosynthesis; beta-alanine from L-aspartate: step 1/1. Functionally, catalyzes the pyruvoyl-dependent decarboxylation of aspartate to produce beta-alanine. The chain is Aspartate 1-decarboxylase from Rhodococcus jostii (strain RHA1).